The chain runs to 202 residues: Peptide methionine sulfoxide reductase A1 (202 aa).

The interval 1–20 (MNILNKLGIGSSRQTNMDPS) is disordered. Serine 189 is modified (phosphoserine).

Belongs to the MsrA Met sulfoxide reductase family.

Its subcellular location is the cytoplasm. The protein localises to the cytosol. The catalysed reaction is L-methionyl-[protein] + [thioredoxin]-disulfide + H2O = L-methionyl-(S)-S-oxide-[protein] + [thioredoxin]-dithiol. It catalyses the reaction [thioredoxin]-disulfide + L-methionine + H2O = L-methionine (S)-S-oxide + [thioredoxin]-dithiol. Functionally, catalyzes the reduction of methionine sulfoxide (MetSO) to methionine in proteins. Plays a protective role against oxidative stress by restoring activity to proteins that have been inactivated by methionine oxidation. MSRA family specifically reduces the MetSO S-enantiomer. This chain is Peptide methionine sulfoxide reductase A1 (MSRA1), found in Arabidopsis thaliana (Mouse-ear cress).